Reading from the N-terminus, the 79-residue chain is Sec-independent protein translocase protein TatA (79 aa).

A helical membrane pass occupies residues 1-21; it reads MGGISIWQLLIIALIVVLLFG. The interval 43-79 is disordered; the sequence is MSSEEDKKALEDTEAAKTAQTTQQATEKKPESNKEQA. Positions 46–57 are enriched in basic and acidic residues; that stretch reads EEDKKALEDTEA. Residues 58-67 show a composition bias toward low complexity; the sequence is AKTAQTTQQA. Residues 68 to 79 show a composition bias toward basic and acidic residues; it reads TEKKPESNKEQA.

It belongs to the TatA/E family. As to quaternary structure, the Tat system comprises two distinct complexes: a TatABC complex, containing multiple copies of TatA, TatB and TatC subunits, and a separate TatA complex, containing only TatA subunits. Substrates initially bind to the TatABC complex, which probably triggers association of the separate TatA complex to form the active translocon.

The protein resides in the cell inner membrane. Functionally, part of the twin-arginine translocation (Tat) system that transports large folded proteins containing a characteristic twin-arginine motif in their signal peptide across membranes. TatA could form the protein-conducting channel of the Tat system. The polypeptide is Sec-independent protein translocase protein TatA (Shewanella putrefaciens (strain CN-32 / ATCC BAA-453)).